A 282-amino-acid chain; its full sequence is Pantothenate synthetase (282 aa).

30 to 37 contributes to the ATP binding site; sequence MGALHAGH. Catalysis depends on His-37, which acts as the Proton donor. Residue Gln-61 participates in (R)-pantoate binding. Gln-61 provides a ligand contact to beta-alanine. 147-150 contributes to the ATP binding site; it reads GEKD. Gln-153 contacts (R)-pantoate. ATP contacts are provided by residues Val-176 and 184–187; that span reads LSSR.

This sequence belongs to the pantothenate synthetase family. In terms of assembly, homodimer.

It localises to the cytoplasm. It carries out the reaction (R)-pantoate + beta-alanine + ATP = (R)-pantothenate + AMP + diphosphate + H(+). Its pathway is cofactor biosynthesis; (R)-pantothenate biosynthesis; (R)-pantothenate from (R)-pantoate and beta-alanine: step 1/1. Functionally, catalyzes the condensation of pantoate with beta-alanine in an ATP-dependent reaction via a pantoyl-adenylate intermediate. This is Pantothenate synthetase from Bacteroides fragilis (strain YCH46).